The chain runs to 254 residues: 5-oxoprolinase subunit A (254 aa).

Belongs to the LamB/PxpA family. Forms a complex composed of PxpA, PxpB and PxpC.

The enzyme catalyses 5-oxo-L-proline + ATP + 2 H2O = L-glutamate + ADP + phosphate + H(+). In terms of biological role, catalyzes the cleavage of 5-oxoproline to form L-glutamate coupled to the hydrolysis of ATP to ADP and inorganic phosphate. This Rhodopseudomonas palustris (strain ATCC BAA-98 / CGA009) protein is 5-oxoprolinase subunit A.